A 247-amino-acid polypeptide reads, in one-letter code: Cytochrome c oxidase subunit 2 (247 aa).

At 1 to 38 (MREMMMNNMLNDVPTPWAMYFQDSATPNMEGMMELHNN) the chain is on the mitochondrial intermembrane side. A helical transmembrane segment spans residues 39-55 (VLFYLCVMLGFVTYMLY). Over 56–86 (NVMTVYNKSAMAYKYMNHGQFMEMMWTTFPA) the chain is Mitochondrial matrix. The helical transmembrane segment at 87–103 (MMLLMMAFPSFMLLYMC) threads the bilayer. Over 104–247 (DEVMAPAMTI…VDFLAWIDEQ (144 aa)) the chain is Mitochondrial intermembrane. Residues H182, C217, E219, C221, H225, and M228 each coordinate Cu cation. Position 219 (E219) interacts with Mg(2+).

Belongs to the cytochrome c oxidase subunit 2 family. In terms of assembly, component of the cytochrome c oxidase (complex IV, CIV), a multisubunit enzyme composed of a catalytic core of 3 subunits and several supernumerary subunits. The complex exists as a monomer or a dimer and forms supercomplexes (SCs) in the inner mitochondrial membrane with ubiquinol-cytochrome c oxidoreductase (cytochrome b-c1 complex, complex III, CIII). Cu cation serves as cofactor.

The protein resides in the mitochondrion inner membrane. The enzyme catalyses 4 Fe(II)-[cytochrome c] + O2 + 8 H(+)(in) = 4 Fe(III)-[cytochrome c] + 2 H2O + 4 H(+)(out). Its function is as follows. Component of the cytochrome c oxidase, the last enzyme in the mitochondrial electron transport chain which drives oxidative phosphorylation. The respiratory chain contains 3 multisubunit complexes succinate dehydrogenase (complex II, CII), ubiquinol-cytochrome c oxidoreductase (cytochrome b-c1 complex, complex III, CIII) and cytochrome c oxidase (complex IV, CIV), that cooperate to transfer electrons derived from NADH and succinate to molecular oxygen, creating an electrochemical gradient over the inner membrane that drives transmembrane transport and the ATP synthase. Cytochrome c oxidase is the component of the respiratory chain that catalyzes the reduction of oxygen to water. Electrons originating from reduced cytochrome c in the intermembrane space (IMS) are transferred via the dinuclear copper A center (CU(A)) of subunit 2 and heme A of subunit 1 to the active site in subunit 1, a binuclear center (BNC) formed by heme A3 and copper B (CU(B)). The BNC reduces molecular oxygen to 2 water molecules using 4 electrons from cytochrome c in the IMS and 4 protons from the mitochondrial matrix. The sequence is that of Cytochrome c oxidase subunit 2 (COX2) from Eeniella nana (Yeast).